The chain runs to 149 residues: Nucleoside diphosphate kinase (149 aa).

ATP is bound by residues K9, F57, R85, T91, R102, and N112. The active-site Pros-phosphohistidine intermediate is the H115.

Belongs to the NDK family. Homotetramer. Requires Mg(2+) as cofactor.

The protein localises to the cytoplasm. It catalyses the reaction a 2'-deoxyribonucleoside 5'-diphosphate + ATP = a 2'-deoxyribonucleoside 5'-triphosphate + ADP. The enzyme catalyses a ribonucleoside 5'-diphosphate + ATP = a ribonucleoside 5'-triphosphate + ADP. Major role in the synthesis of nucleoside triphosphates other than ATP. The ATP gamma phosphate is transferred to the NDP beta phosphate via a ping-pong mechanism, using a phosphorylated active-site intermediate. This chain is Nucleoside diphosphate kinase, found in Microcystis aeruginosa (strain NIES-843 / IAM M-2473).